Consider the following 185-residue polypeptide: Ribosome-recycling factor (185 aa).

Belongs to the RRF family.

It is found in the cytoplasm. In terms of biological role, responsible for the release of ribosomes from messenger RNA at the termination of protein biosynthesis. May increase the efficiency of translation by recycling ribosomes from one round of translation to another. This Brevibacillus brevis (strain 47 / JCM 6285 / NBRC 100599) protein is Ribosome-recycling factor.